The primary structure comprises 1610 residues: NHS-like protein 1 (1610 aa).

Residue Ser-24 is modified to Phosphoserine. Residues 145–169 (SPFCDDYQDEDEETDQKCSLSSSEE) form a disordered region. Residues Ser-198 and Ser-328 each carry the phosphoserine modification. Positions 433–448 (TAQSAGQRESKSSGSS) are enriched in polar residues. Disordered stretches follow at residues 433-477 (TAQS…HWNE) and 531-602 (PAHP…DAGS). Ser-568 carries the post-translational modification Phosphoserine. Residues 578 to 594 (GYSTPTSNMSSCSLDQT) are compositionally biased toward polar residues. Ser-639 carries the post-translational modification Phosphoserine. The span at 649-667 (QKNQGDRSNYQDKSLSRNI) shows a compositional bias: polar residues. Disordered stretches follow at residues 649-693 (QKNQ…KKSS), 715-778 (SLPG…SVKS), 791-981 (TGMQ…PPPE), 997-1535 (PRPA…GEGE), and 1566-1610 (EGGL…SEES). The span at 715–730 (SLPGKSGSSPSQSPCS) shows a compositional bias: low complexity. Composition is skewed to polar residues over residues 740-760 (SRSQ…TPNV), 767-778 (TPSQSDTSSVKS), and 851-865 (SPSS…TPTA). The span at 895-928 (SLISSVSISSSSTSLSSSTSTEGSGTMKKLDPAV) shows a compositional bias: low complexity. 2 stretches are compositionally biased toward pro residues: residues 929–946 (GSPP…PFPC) and 970–981 (PHSPVFPPPPPE). Residues 1001–1011 (LSPILPDSPVS) are compositionally biased toward low complexity. Residues 1012-1031 (LPLPPPLLPSSEPPPAPPLD) show a composition bias toward pro residues. Positions 1041–1053 (PFTNSGQPESSRG) are enriched in polar residues. Ser-1089 is subject to Phosphoserine. Polar residues predominate over residues 1122-1153 (SRNSTNEMESESQPASVTSSLPTPAKSSSQGD). Phosphoserine is present on Ser-1167. Residues 1180–1193 (PSPSTTPLPDSSPS) are compositionally biased toward low complexity. Residue Ser-1233 is modified to Phosphoserine. Composition is skewed to basic and acidic residues over residues 1240–1249 (GSVHSREAKE) and 1373–1383 (GRRDSDDDHSR). Residues Ser-1386 and Ser-1388 each carry the phosphoserine modification. Thr-1392 is subject to Phosphothreonine. Positions 1405 to 1422 (QVGSIQRSIRKSSTSSDN) are enriched in polar residues. Over residues 1447–1460 (KNTDPRFQRSRSEP) the composition is skewed to basic and acidic residues. Composition is skewed to low complexity over residues 1461 to 1474 (SPDA…CSPS) and 1504 to 1516 (SRTP…SRYS).

It belongs to the NHS family. As to expression, widely expressed. Expressed in adult and fetal brain, fetal eyes, adult lens, kidney, liver and intestine.

This Homo sapiens (Human) protein is NHS-like protein 1 (NHSL1).